We begin with the raw amino-acid sequence, 689 residues long: DNA topoisomerase 1 (689 aa).

One can recognise a Toprim domain in the interval 3–113 (DNLVIVESPA…KENRVVFNEI (111 aa)). 2 residues coordinate Mg(2+): Glu-9 and Asp-82. Residues 129–557 (EMNLVDAQQA…FFSSFKQDVE (429 aa)) enclose the Topo IA-type catalytic domain. Positions 163–168 (SAGRVQ) are interaction with DNA. Tyr-298 (O-(5'-phospho-DNA)-tyrosine intermediate) is an active-site residue. A disordered region spans residues 328–357 (SKRKASGKQGDQDAHEAIRPSSTMRTPDDM). 3 consecutive C4-type zinc fingers follow at residues 577 to 603 (CEVC…FPDC), 617 to 645 (CPKC…YPEC), and 658 to 681 (CPKC…CSNC).

This sequence belongs to the type IA topoisomerase family. As to quaternary structure, monomer. Mg(2+) is required as a cofactor.

The enzyme catalyses ATP-independent breakage of single-stranded DNA, followed by passage and rejoining.. Its function is as follows. Releases the supercoiling and torsional tension of DNA, which is introduced during the DNA replication and transcription, by transiently cleaving and rejoining one strand of the DNA duplex. Introduces a single-strand break via transesterification at a target site in duplex DNA. The scissile phosphodiester is attacked by the catalytic tyrosine of the enzyme, resulting in the formation of a DNA-(5'-phosphotyrosyl)-enzyme intermediate and the expulsion of a 3'-OH DNA strand. The free DNA strand then undergoes passage around the unbroken strand, thus removing DNA supercoils. Finally, in the religation step, the DNA 3'-OH attacks the covalent intermediate to expel the active-site tyrosine and restore the DNA phosphodiester backbone. This chain is DNA topoisomerase 1, found in Staphylococcus aureus (strain N315).